A 377-amino-acid polypeptide reads, in one-letter code: Flagellar P-ring protein (377 aa).

Residues 1–30 form the signal peptide; sequence MLARFLSSLLKASVTALAVVVAFGFAANFA.

It belongs to the FlgI family. In terms of assembly, the basal body constitutes a major portion of the flagellar organelle and consists of four rings (L,P,S, and M) mounted on a central rod.

It is found in the periplasm. The protein localises to the bacterial flagellum basal body. Assembles around the rod to form the L-ring and probably protects the motor/basal body from shearing forces during rotation. The polypeptide is Flagellar P-ring protein (Cupriavidus pinatubonensis (strain JMP 134 / LMG 1197) (Cupriavidus necator (strain JMP 134))).